The primary structure comprises 218 residues: Small ribosomal subunit protein uS3c (218 aa).

The 72-residue stretch at 47–118 (VQNNIRISSG…KLNIAITRIS (72 aa)) folds into the KH type-2 domain.

The protein belongs to the universal ribosomal protein uS3 family. In terms of assembly, part of the 30S ribosomal subunit.

The protein localises to the plastid. It localises to the chloroplast. This is Small ribosomal subunit protein uS3c (rps3) from Draba nemorosa (Woodland whitlowgrass).